A 412-amino-acid polypeptide reads, in one-letter code: uncharacterized protein (412 aa).

His49 contacts Zn(2+). The active-site Proton acceptor is Glu52. The Zn(2+) site is built by His53 and Glu129.

Belongs to the peptidase M16 family. Zn(2+) is required as a cofactor.

This is an uncharacterized protein from Rickettsia bellii (strain RML369-C).